We begin with the raw amino-acid sequence, 39 residues long: Photosystem II reaction center protein L (39 aa).

A helical transmembrane segment spans residues Ser-18–Phe-38.

This sequence belongs to the PsbL family. As to quaternary structure, PSII is composed of 1 copy each of membrane proteins PsbA, PsbB, PsbC, PsbD, PsbE, PsbF, PsbH, PsbI, PsbJ, PsbK, PsbL, PsbM, PsbT, PsbX, PsbY, PsbZ, Psb30/Ycf12, peripheral proteins PsbO, CyanoQ (PsbQ), PsbU, PsbV and a large number of cofactors. It forms dimeric complexes.

The protein localises to the cellular thylakoid membrane. Its function is as follows. One of the components of the core complex of photosystem II (PSII). PSII is a light-driven water:plastoquinone oxidoreductase that uses light energy to abstract electrons from H(2)O, generating O(2) and a proton gradient subsequently used for ATP formation. It consists of a core antenna complex that captures photons, and an electron transfer chain that converts photonic excitation into a charge separation. This subunit is found at the monomer-monomer interface and is required for correct PSII assembly and/or dimerization. This chain is Photosystem II reaction center protein L, found in Synechococcus sp. (strain CC9605).